Reading from the N-terminus, the 354-residue chain is Heat-inducible transcription repressor HrcA (354 aa).

It belongs to the HrcA family.

In terms of biological role, negative regulator of class I heat shock genes (grpE-dnaK-dnaJ and groELS operons). Prevents heat-shock induction of these operons. The chain is Heat-inducible transcription repressor HrcA from Novosphingobium aromaticivorans (strain ATCC 700278 / DSM 12444 / CCUG 56034 / CIP 105152 / NBRC 16084 / F199).